Consider the following 263-residue polypeptide: Regulatory protein RecX (263 aa).

The protein belongs to the RecX family.

The protein localises to the cytoplasm. In terms of biological role, modulates RecA activity. The chain is Regulatory protein RecX from Bacillus pumilus (strain SAFR-032).